A 177-amino-acid polypeptide reads, in one-letter code: Large ribosomal subunit protein uL6 (177 aa).

The protein belongs to the universal ribosomal protein uL6 family. As to quaternary structure, part of the 50S ribosomal subunit.

This protein binds to the 23S rRNA, and is important in its secondary structure. It is located near the subunit interface in the base of the L7/L12 stalk, and near the tRNA binding site of the peptidyltransferase center. This chain is Large ribosomal subunit protein uL6, found in Bartonella quintana (strain Toulouse) (Rochalimaea quintana).